The primary structure comprises 152 residues: Ribosome maturation factor RimP (152 aa).

The protein belongs to the RimP family.

It is found in the cytoplasm. Functionally, required for maturation of 30S ribosomal subunits. The chain is Ribosome maturation factor RimP from Alteromonas mediterranea (strain DSM 17117 / CIP 110805 / LMG 28347 / Deep ecotype).